The primary structure comprises 347 residues: Heat-inducible transcription repressor HrcA (347 aa).

It belongs to the HrcA family.

Its function is as follows. Negative regulator of class I heat shock genes (grpE-dnaK-dnaJ and groELS operons). Prevents heat-shock induction of these operons. The sequence is that of Heat-inducible transcription repressor HrcA from Mycoplasmopsis pulmonis (strain UAB CTIP) (Mycoplasma pulmonis).